We begin with the raw amino-acid sequence, 233 residues long: MSEAKKLLAQGLWKNNSALVQLLGLCPLLAVSSTATNALGLGLATTLVLVCTNTAVSALRRWVPSEIRIPIYVMIIASVVSTVQMLINAYAFGLYQSLGIFIPLIVTNCIVIGRAEAYAAKNPVGLSALDGFAMGMGATCALFVLGALREILGNGTLFDGADMLLGSWATVLRIDILHLDTPFLLAMLPPGAFIGLGLLLAGKYVIDEKMKARKANTRVNVPQLQDGDAEKAL.

Helical transmembrane passes span 18–38 (ALVQLLGLCPLLAVSSTATNA), 39–59 (LGLGLATTLVLVCTNTAVSAL), 69–89 (IPIYVMIIASVVSTVQMLINA), 92–112 (FGLYQSLGIFIPLIVTNCIVI), 128–148 (ALDGFAMGMGATCALFVLGAL), and 182–202 (PFLLAMLPPGAFIGLGLLLAG).

The protein belongs to the NqrDE/RnfAE family. The complex is composed of six subunits: RnfA, RnfB, RnfC, RnfD, RnfE and RnfG.

It localises to the cell inner membrane. In terms of biological role, part of a membrane-bound complex that couples electron transfer with translocation of ions across the membrane. The sequence is that of Ion-translocating oxidoreductase complex subunit E from Yersinia pseudotuberculosis serotype IB (strain PB1/+).